A 444-amino-acid polypeptide reads, in one-letter code: Phosphomethylpyrimidine synthase (444 aa).

Substrate contacts are provided by residues Asn-80, Met-109, Tyr-138, His-174, Ser-194–Gly-196, Asp-235–Arg-238, and Glu-274. His-278 provides a ligand contact to Zn(2+). Tyr-301 serves as a coordination point for substrate. Position 342 (His-342) interacts with Zn(2+). The [4Fe-4S] cluster site is built by Cys-422, Cys-425, and Cys-430.

Belongs to the ThiC family. In terms of assembly, homodimer. The cofactor is [4Fe-4S] cluster.

The catalysed reaction is 5-amino-1-(5-phospho-beta-D-ribosyl)imidazole + S-adenosyl-L-methionine = 4-amino-2-methyl-5-(phosphooxymethyl)pyrimidine + CO + 5'-deoxyadenosine + formate + L-methionine + 3 H(+). It participates in cofactor biosynthesis; thiamine diphosphate biosynthesis. In terms of biological role, catalyzes the synthesis of the hydroxymethylpyrimidine phosphate (HMP-P) moiety of thiamine from aminoimidazole ribotide (AIR) in a radical S-adenosyl-L-methionine (SAM)-dependent reaction. The polypeptide is Phosphomethylpyrimidine synthase (Nitratiruptor sp. (strain SB155-2)).